The sequence spans 101 residues: Acylphosphatase (101 aa).

The 87-residue stretch at 15–101 (RMYARVYGLV…KGEFEDFETY (87 aa)) folds into the Acylphosphatase-like domain. Residues Arg30 and Asn48 contribute to the active site.

The protein belongs to the acylphosphatase family.

The enzyme catalyses an acyl phosphate + H2O = a carboxylate + phosphate + H(+). This is Acylphosphatase (acyP) from Saccharolobus solfataricus (strain ATCC 35092 / DSM 1617 / JCM 11322 / P2) (Sulfolobus solfataricus).